Here is a 459-residue protein sequence, read N- to C-terminus: Protein FAM90A27P (459 aa).

Over residues 1–10 the composition is skewed to basic residues; it reads MARHSVHHQA. Disordered regions lie at residues 1 to 41, 74 to 136, 153 to 239, and 259 to 459; these read MARH…ESRV, SHKE…WKEP, HTTK…ALQP, and PDAD…SDSD. Over residues 125–136 the composition is skewed to basic and acidic residues; sequence PQEKMQEAWKEP. Residues 184 to 194 are compositionally biased toward polar residues; it reads HNDSPQLSTCG. Residues 341 to 353 are compositionally biased toward low complexity; that stretch reads KATAETAATKTAT. The segment covering 415 to 427 has biased composition (polar residues); it reads PPENSASAQSPRF.

The protein belongs to the FAM90 family.

The polypeptide is Protein FAM90A27P (FAM90A27P) (Homo sapiens (Human)).